The following is a 313-amino-acid chain: Ribosomal protein L11 methyltransferase (313 aa).

S-adenosyl-L-methionine contacts are provided by threonine 164, glycine 185, aspartate 207, and asparagine 249.

It belongs to the methyltransferase superfamily. PrmA family.

It localises to the cytoplasm. It carries out the reaction L-lysyl-[protein] + 3 S-adenosyl-L-methionine = N(6),N(6),N(6)-trimethyl-L-lysyl-[protein] + 3 S-adenosyl-L-homocysteine + 3 H(+). Functionally, methylates ribosomal protein L11. The protein is Ribosomal protein L11 methyltransferase of Clostridium botulinum (strain Eklund 17B / Type B).